The primary structure comprises 142 residues: MKTFVAKPETVKRDWYVVDAEGKTLGRLATEIASRLRGKHKAEFTPHVDTGDYIVVINAEKITVTGNKAAAKTYYSYSGFPGGLKSITFDKLIVRKPEMILEIAVKGMLPKGPLGRAMLRKLKVYAGTEHNHAAQQPQVLDI.

Belongs to the universal ribosomal protein uL13 family. In terms of assembly, part of the 50S ribosomal subunit.

Functionally, this protein is one of the early assembly proteins of the 50S ribosomal subunit, although it is not seen to bind rRNA by itself. It is important during the early stages of 50S assembly. This is Large ribosomal subunit protein uL13 from Tolumonas auensis (strain DSM 9187 / NBRC 110442 / TA 4).